The chain runs to 275 residues: Large ribosomal subunit protein uL2 (275 aa).

The tract at residues 221–275 is disordered; that stretch reads RGTAMNPVDHPHGGGEGRTGEGRVPVNPWGQPTKGYRTRSNKRTNSMIVQRRHKR. A compositionally biased stretch (basic and acidic residues) spans 229–241; the sequence is DHPHGGGEGRTGE.

Belongs to the universal ribosomal protein uL2 family. Part of the 50S ribosomal subunit. Forms a bridge to the 30S subunit in the 70S ribosome.

Its function is as follows. One of the primary rRNA binding proteins. Required for association of the 30S and 50S subunits to form the 70S ribosome, for tRNA binding and peptide bond formation. It has been suggested to have peptidyltransferase activity; this is somewhat controversial. Makes several contacts with the 16S rRNA in the 70S ribosome. The sequence is that of Large ribosomal subunit protein uL2 from Dechloromonas aromatica (strain RCB).